A 347-amino-acid chain; its full sequence is MDGLMTAVVKQYHKEGADIVKKEIPKIGPDEVLIKVKATSICGTDVHIYVWNEWAKSRIKPPKTMGHEFVGEVVEIGENVTSVKVGDLVSAETHIVCGKCRACRTGNAHICENTLILGVDTDGAFAEYIKVPESNVWINDKNIPLEILSIQEPLGNAVHTVFSGDVVGKSVAVIGCGPIGMMAIPLLKRTGAAAIFAIEPADYRRELAHKLGATRVINPLREDVVSIIKSETEGYGADVVLDFSGNPTAIRQGLEYIAKGGRMSILGLPDNEVPIDITNNVVFKGITIQGITGRRMYDTWYTVKGLLKSGLAEDLKPIITHTFPLTEYQKGMELMIKGQCGKVVLYP.

Cys42 is a Zn(2+) binding site. Active-site charge relay system residues include Thr44 and His47. The Zn(2+) site is built by His67, Glu68, Cys97, Cys100, Cys103, and Cys111. NAD(+) is bound by residues Ile179, Glu199, Arg204, 266–268, and 291–292; these read LGL and IT.

Belongs to the zinc-containing alcohol dehydrogenase family. As to quaternary structure, homotetramer. Zn(2+) serves as cofactor.

The protein localises to the cytoplasm. The catalysed reaction is L-threonine + NAD(+) = (2S)-2-amino-3-oxobutanoate + NADH + H(+). Its pathway is amino-acid degradation; L-threonine degradation via oxydo-reductase pathway; glycine from L-threonine: step 1/2. In terms of biological role, catalyzes the NAD(+)-dependent oxidation of L-threonine to 2-amino-3-ketobutyrate. This Caldanaerobacter subterraneus subsp. tengcongensis (strain DSM 15242 / JCM 11007 / NBRC 100824 / MB4) (Thermoanaerobacter tengcongensis) protein is L-threonine 3-dehydrogenase.